Reading from the N-terminus, the 364-residue chain is Coproporphyrin III ferrochelatase (364 aa).

Fe-coproporphyrin III-binding residues include R29 and Y118. H169 and E250 together coordinate Fe(2+).

Belongs to the ferrochelatase family.

The protein localises to the cytoplasm. It carries out the reaction Fe-coproporphyrin III + 2 H(+) = coproporphyrin III + Fe(2+). The protein operates within porphyrin-containing compound metabolism; protoheme biosynthesis. Involved in coproporphyrin-dependent heme b biosynthesis. Catalyzes the insertion of ferrous iron into coproporphyrin III to form Fe-coproporphyrin III. This is Coproporphyrin III ferrochelatase from Streptococcus pneumoniae serotype 4 (strain ATCC BAA-334 / TIGR4).